Reading from the N-terminus, the 38-residue chain is Alpha-conotoxin PeIA (38 aa).

A propeptide spanning residues 1 to 21 (FDGRNAAANDKASDLVALTVR) is cleaved from the precursor. Cystine bridges form between C23–C29 and C24–C37. The segment at 25-27 (SHP) is ser-Xaa-Pro motif, crucial for potent interaction with nAChR. C37 is subject to Cysteine amide.

The protein belongs to the conotoxin A superfamily. In terms of processing, the hydroxylation at position Pro-27 is critical, since an hydroxylation at this position decreases potency of the toxin to inhibit both alpha-3-beta-2 (1300-fold) and alpha-6/alpha-3-beta-2-beta-3 (130-fold) nAChRs. A non-modified residue at position Pro-34 is critical, since a hydroxylation at this position decreases potency of the toxin to inhibit alpha-3-beta-2 (1-45-fold) and increases potency to inhibit alpha-6/alpha-3-beta-2-beta-3 (1.77-fold) nAChRs. In terms of tissue distribution, expressed by the venom duct.

The protein resides in the secreted. In terms of biological role, alpha-conotoxins act on postsynaptic membranes, they bind to the nicotinic acetylcholine receptors (nAChR) and thus inhibit them. This synthetic peptide potently and reversibly blocks alpha-9-alpha-10/CHRNA9-CHRNA10 nAChR (IC(50)=6.9-54.9 nM), alpha-3-beta-2/CHRNA3-CHRNB2 (IC(50)=9.7-97.5 nM) and alpha-6/alpha-3-beta-2-beta-3 (CHRNA6/CHRNA3-CHRNB2-CHRNB3) (IC(50)=11.1-17.2 nM). It also inhibits alpha-6/alpha-3-beta-4 (CHRNA6/CHRNA3-CHRNB4) nAChR with a higher potency on human (IC(50)=6.75 nM) than on rat receptors (IC(50)=130-147 nM). Also shows a weak ability to inhibit alpha-3-beta-4/CHRNA3-CHRNB4 (IC(50)=480-1500 nM). This synthetic toxin also inhibits N-type calcium channels (Ca2.2/CACNA1B) (IC(50)=1.1 nM) via the activation of the G protein-coupled GABA(B) receptor in DRG neurons. Also exhibits inhibition of D.melanogaster alpha-7/CHRNA7 nAChRs. The chain is Alpha-conotoxin PeIA from Conus pergrandis (Grand cone).